The chain runs to 215 residues: Adenylate kinase (215 aa).

Residue 10–15 coordinates ATP; that stretch reads GCGKGT. The segment at 30 to 59 is NMP; the sequence is STGDIFRQTIDQKGPYWEELKSYISKGLLV. AMP contacts are provided by residues Thr-31, Arg-36, 57 to 59, and Gln-91; that span reads LLV. The interval 120–157 is LID; the sequence is GRRICSKCKRIYNIHYSAPKKEDICDDDGEFLIQRKDD. An ATP-binding site is contributed by Arg-121. Residues Cys-124 and Cys-127 each coordinate Zn(2+). ATP is bound at residue 130 to 131; the sequence is IY. 2 residues coordinate Zn(2+): Cys-144 and Asp-147. AMP is bound by residues Arg-154 and Arg-165.

This sequence belongs to the adenylate kinase family. As to quaternary structure, monomer.

It is found in the cytoplasm. It carries out the reaction AMP + ATP = 2 ADP. It participates in purine metabolism; AMP biosynthesis via salvage pathway; AMP from ADP: step 1/1. Functionally, catalyzes the reversible transfer of the terminal phosphate group between ATP and AMP. Plays an important role in cellular energy homeostasis and in adenine nucleotide metabolism. In Malacoplasma penetrans (strain HF-2) (Mycoplasma penetrans), this protein is Adenylate kinase.